We begin with the raw amino-acid sequence, 258 residues long: Shikimate dehydrogenase (NADP(+)) (258 aa).

Shikimate-binding positions include 14–16 (SES) and T61. K65 (proton acceptor) is an active-site residue. 2 residues coordinate shikimate: N86 and D101. NADP(+) contacts are provided by residues 125 to 129 (GSGGS) and L211. Y213 lines the shikimate pocket. G234 contacts NADP(+).

It belongs to the shikimate dehydrogenase family. In terms of assembly, homodimer.

It carries out the reaction shikimate + NADP(+) = 3-dehydroshikimate + NADPH + H(+). It participates in metabolic intermediate biosynthesis; chorismate biosynthesis; chorismate from D-erythrose 4-phosphate and phosphoenolpyruvate: step 4/7. Functionally, involved in the biosynthesis of the chorismate, which leads to the biosynthesis of aromatic amino acids. Catalyzes the reversible NADPH linked reduction of 3-dehydroshikimate (DHSA) to yield shikimate (SA). The chain is Shikimate dehydrogenase (NADP(+)) from Clostridium botulinum (strain ATCC 19397 / Type A).